A 154-amino-acid chain; its full sequence is Putative peroxiredoxin MT1643 (154 aa).

The region spanning 1–153 (MKTGDTVADF…ALATLRAIRS (153 aa)) is the Thioredoxin domain. C44 serves as the catalytic Cysteine sulfenic acid (-SOH) intermediate. A disulfide bridge connects residues C44 and C49.

It belongs to the peroxiredoxin family. BCP/PrxQ subfamily. As to quaternary structure, monomer.

The enzyme catalyses a hydroperoxide + [thioredoxin]-dithiol = an alcohol + [thioredoxin]-disulfide + H2O. Functionally, thiol-specific peroxidase that catalyzes the reduction of hydrogen peroxide and organic hydroperoxides to water and alcohols, respectively. Plays a role in cell protection against oxidative stress by detoxifying peroxides and as sensor of hydrogen peroxide-mediated signaling events. The protein is Putative peroxiredoxin MT1643 (bcpB) of Mycobacterium tuberculosis (strain CDC 1551 / Oshkosh).